The chain runs to 313 residues: Small ribosomal subunit protein uS2 (313 aa).

The interval 281–301 (AAPAAPAVEPAPEAAQEATAE) is disordered.

The protein belongs to the universal ribosomal protein uS2 family.

This is Small ribosomal subunit protein uS2 from Caulobacter sp. (strain K31).